We begin with the raw amino-acid sequence, 369 residues long: Mitogen-activated protein kinase 11 (369 aa).

One can recognise a Protein kinase domain in the interval 40 to 326; it reads VPPLRPIGRG…VDEALCHPYL (287 aa). Residues 46–54 and Lys69 contribute to the ATP site; that span reads IGRGASGIV. The active-site Proton acceptor is Asp166. Thr198 is subject to Phosphothreonine. Positions 198–200 match the TXY motif; sequence TEY. Tyr200 carries the phosphotyrosine modification. At Thr203 the chain carries Phosphothreonine.

The protein belongs to the protein kinase superfamily. CMGC Ser/Thr protein kinase family. MAP kinase subfamily. Interacts with MKK1, MKK2 and MKK6. Dually phosphorylated on Thr-198 and Tyr-200, which activates the enzyme.

The catalysed reaction is L-seryl-[protein] + ATP = O-phospho-L-seryl-[protein] + ADP + H(+). The enzyme catalyses L-threonyl-[protein] + ATP = O-phospho-L-threonyl-[protein] + ADP + H(+). With respect to regulation, activated by threonine and tyrosine phosphorylation. This Arabidopsis thaliana (Mouse-ear cress) protein is Mitogen-activated protein kinase 11 (MPK11).